A 211-amino-acid chain; its full sequence is Abscisic acid receptor PYL7 (211 aa).

Residues 29–180 form an START-like region; sequence HHCRENQCTS…NLKSLACVSE (152 aa). Intrachain disulfides connect Cys-31/Cys-161 and Cys-36/Cys-161. Residues Lys-65, 93-98, 120-126, and Glu-145 each bind abscisate; these read ATTSTE and RLKNYSS. The Gate loop motif lies at 89–93; the sequence is SGLPA. The Latch loop motif lies at 119 to 121; sequence HRL.

The protein belongs to the PYR/PYL/RCAR abscisic acid intracellular receptor family. Homodimer. Binds ABA on one subunit only. Binds to CARs protein in an ABA-independent manner, both at the plasma membrane and in the nucleus. Interacts with ABI1, and possibly with other PP2Cs.

It localises to the cytoplasm. The protein localises to the nucleus. It is found in the cell membrane. In terms of biological role, receptor for abscisic acid (ABA) required for ABA-mediated responses such as stomatal closure and germination inhibition. Inhibits the activity of group-A protein phosphatases type 2C (PP2Cs) when activated by ABA. The chain is Abscisic acid receptor PYL7 (PYL7) from Arabidopsis thaliana (Mouse-ear cress).